A 195-amino-acid chain; its full sequence is ADP-ribosylation factor L (195 aa).

Gly-2 carries the N-myristoyl glycine lipid modification. GTP-binding positions include 25–32 (GLENSGKT), 72–76 (DLLYP), and 131–134 (NKQD).

Belongs to the small GTPase superfamily. Arf family.

May be involved in trafficking events within the endosomal system. The polypeptide is ADP-ribosylation factor L (arrL) (Dictyostelium discoideum (Social amoeba)).